The sequence spans 440 residues: Xaa-Pro dipeptidase (440 aa).

Residues aspartate 244, aspartate 255, histidine 335, glutamate 380, and glutamate 419 each coordinate Mn(2+).

The protein belongs to the peptidase M24B family. Bacterial-type prolidase subfamily. It depends on Mn(2+) as a cofactor.

The enzyme catalyses Xaa-L-Pro dipeptide + H2O = an L-alpha-amino acid + L-proline. In terms of biological role, splits dipeptides with a prolyl residue in the C-terminal position. This Shewanella piezotolerans (strain WP3 / JCM 13877) protein is Xaa-Pro dipeptidase.